A 122-amino-acid polypeptide reads, in one-letter code: Small ribosomal subunit protein uS13 (122 aa).

The tract at residues 95-122 is disordered; the sequence is GLPVRGQRTRTNARTRKGPRKTVAKKKK.

Belongs to the universal ribosomal protein uS13 family. In terms of assembly, part of the 30S ribosomal subunit. Forms a loose heterodimer with protein S19. Forms two bridges to the 50S subunit in the 70S ribosome.

Located at the top of the head of the 30S subunit, it contacts several helices of the 16S rRNA. In the 70S ribosome it contacts the 23S rRNA (bridge B1a) and protein L5 of the 50S subunit (bridge B1b), connecting the 2 subunits; these bridges are implicated in subunit movement. Contacts the tRNAs in the A and P-sites. This chain is Small ribosomal subunit protein uS13, found in Thermoanaerobacter pseudethanolicus (strain ATCC 33223 / 39E) (Clostridium thermohydrosulfuricum).